Here is a 291-residue protein sequence, read N- to C-terminus: uncharacterized protein (291 aa).

Residues 68 to 205 form the DAGKc domain; it reads PVAVSASFLW…VIQLWARPRG (138 aa).

This is an uncharacterized protein from Mycobacterium tuberculosis (strain CDC 1551 / Oshkosh).